Here is a 228-residue protein sequence, read N- to C-terminus: 2,3-bisphosphoglycerate-dependent phosphoglycerate mutase (228 aa).

Residues 8–15, 21–22, Arg-60, 87–90, Lys-98, 114–115, and 183–184 each bind substrate; these read RHGQSVWN, TG, ERHY, RR, and GN. Residue His-9 is the Tele-phosphohistidine intermediate of the active site. Glu-87 functions as the Proton donor/acceptor in the catalytic mechanism.

Belongs to the phosphoglycerate mutase family. BPG-dependent PGAM subfamily. Homodimer.

The enzyme catalyses (2R)-2-phosphoglycerate = (2R)-3-phosphoglycerate. Its pathway is carbohydrate degradation; glycolysis; pyruvate from D-glyceraldehyde 3-phosphate: step 3/5. In terms of biological role, catalyzes the interconversion of 2-phosphoglycerate and 3-phosphoglycerate. The protein is 2,3-bisphosphoglycerate-dependent phosphoglycerate mutase of Rhodospirillum centenum (strain ATCC 51521 / SW).